A 287-amino-acid chain; its full sequence is Ribonuclease Z (287 aa).

H64, H66, D68, H69, H124, D191, and H250 together coordinate Zn(2+). The active-site Proton acceptor is the D68.

This sequence belongs to the RNase Z family. Homodimer. The cofactor is Zn(2+).

It catalyses the reaction Endonucleolytic cleavage of RNA, removing extra 3' nucleotides from tRNA precursor, generating 3' termini of tRNAs. A 3'-hydroxy group is left at the tRNA terminus and a 5'-phosphoryl group is left at the trailer molecule.. Zinc phosphodiesterase, which displays some tRNA 3'-processing endonuclease activity. Probably involved in tRNA maturation, by removing a 3'-trailer from precursor tRNA. In Pyrobaculum arsenaticum (strain DSM 13514 / JCM 11321 / PZ6), this protein is Ribonuclease Z.